Here is a 334-residue protein sequence, read N- to C-terminus: Ferredoxin--NADP reductase (334 aa).

Positions 33, 41, 46, 86, 120, 286, and 327 each coordinate FAD.

Belongs to the ferredoxin--NADP reductase type 2 family. Homodimer. FAD is required as a cofactor.

It carries out the reaction 2 reduced [2Fe-2S]-[ferredoxin] + NADP(+) + H(+) = 2 oxidized [2Fe-2S]-[ferredoxin] + NADPH. The chain is Ferredoxin--NADP reductase from Rickettsia akari (strain Hartford).